The sequence spans 173 residues: Photosystem I assembly protein Ycf3 (173 aa).

TPR repeat units follow at residues 35 to 68 (AYVY…EENA), 72 to 105 (GETL…NPKQ), and 120 to 153 (GRTA…NPGG).

It belongs to the Ycf3 family.

It localises to the cellular thylakoid membrane. Its function is as follows. Essential for the assembly of the photosystem I (PSI) complex. May act as a chaperone-like factor to guide the assembly of the PSI subunits. This chain is Photosystem I assembly protein Ycf3, found in Synechococcus sp. (strain CC9311).